The chain runs to 54 residues: 2-aminomuconate deaminase (54 aa).

In terms of assembly, homohexamer.

It carries out the reaction (2Z,4E)-2-aminomuconate + H2O = (3E)-2-oxohex-3-enedioate + NH4(+). The protein operates within xenobiotic degradation; nitrobenzene degradation. Functionally, converts 2-aminomuconate to 4-oxalocrotonate, an intermediate step in the biodegradation of nitrobenzene. This chain is 2-aminomuconate deaminase, found in Ectopseudomonas oleovorans (Pseudomonas oleovorans).